A 108-amino-acid polypeptide reads, in one-letter code: MKIIVSILVLASLLLISSSLASATISDAFGSGAVAPAPQSKDGPALEKWCGQKCEGRCKEAGMKDRCLKYCGICCKDCQCVPSGTYGNKHECACYRDKLSSKGTPKCP.

Positions 1 to 23 (MKIIVSILVLASLLLISSSLASA) are cleaved as a signal peptide.

Belongs to the GASA family. Six disulfide bonds may be present.

It is found in the secreted. Its function is as follows. Gibberellin-regulated protein that may function in hormonal controlled steps of development such as seed germination, flowering and seed maturation. This is Gibberellin-regulated protein 7 (GASA7) from Arabidopsis thaliana (Mouse-ear cress).